Consider the following 222-residue polypeptide: MPKLTPTERGIAIYNPLVLQIYDYWVLNIVNTWAWRCPTKTHLLPLFVSNIGSNHLDIGVGTGYYLANGTIPQTTRLTLCDLSPTAMAKAKARAGREDARELLCDVLKPLPVRAGEKFDSVSMYFLLHCLPGPVGNKICVFEHVKGVLKEDGVVTGATVLGKGVKDNFFGGLIRRFCVYDGIMSNETDDVESFVEALKANFEVVEVDVIGVVLVFKAMKPKL.

It belongs to the methyltransferase superfamily.

The enzyme catalyses emodin + S-adenosyl-L-methionine = physcion + S-adenosyl-L-homocysteine. It functions in the pathway secondary metabolite biosynthesis. Functionally, O-methyltransferase; part of the gene cluster that mediates the biosynthesis of physcion, a natural anthraquinone fungicide that can prevent plant fungal infections. Within the pathway, the O-methyltransferase AcOMT catalyzes the last step by transferring a methyl group to C-6 hydroxyl of emodin to form physcion. AcOMT may also methylate the C-6 hydroxyl group of emodin anthrone to produce physcion-anthrone B. The pathway begins with the polyketide synthase AcPKS that condenses 8 malonyl-CoA units to synthesize atrochrysone thioester which is released from the synthase by the atrochrysone carboxyl ACP thioesterase AcTE that breaks the thioester bond and leads to free atrochrysone carboxylic acid. Spontaneous decarboxylation of atrochrysone carboxylic acid leads to the formation of atrochrysone. Then, atrochrysone undergoes spontaneous dehydration and oxidation, giving the products emodin anthrone and emodin. The O-methyltransferase AcOMT then methylates the C-6 hydroxyl of emodin to form physcion. This chain is Physcion biosynthesis cluster O-methyltransferase, found in Aspergillus chevalieri (Eurotium chevalieri).